A 572-amino-acid polypeptide reads, in one-letter code: BOS complex subunit ncln (572 aa).

A signal peptide spans 1-35 (MFEEAGEVLENMLKVSFPLSLVLFLVLVCPLRAEA). Over 36–530 (AHEFSVYRMQ…TMNAYRVKPA (495 aa)) the chain is Extracellular. N-linked (GlcNAc...) asparagine glycans are attached at residues Asn-108, Asn-234, and Asn-436. The helical transmembrane segment at 531–551 (IFDLLLAVCIASYLGVLYLAI) threads the bilayer. The Cytoplasmic segment spans residues 552 to 572 (QNFGLLYGFLRRVTAPRVKQH).

It belongs to the nicastrin family. As to quaternary structure, component of the multi-pass translocon (MPT) complex.

Its subcellular location is the endoplasmic reticulum membrane. Component of the multi-pass translocon (MPT) complex that mediates insertion of multi-pass membrane proteins into the lipid bilayer of membranes. The MPT complex takes over after the SEC61 complex: following membrane insertion of the first few transmembrane segments of proteins by the SEC61 complex, the MPT complex occludes the lateral gate of the SEC61 complex to promote insertion of subsequent transmembrane regions. Antagonizes Nodal signaling and subsequent organization of axial structures during mesodermal patterning. Ectopic expression results in cyclopia, due to a defect in mesendoderm patterning. This Danio rerio (Zebrafish) protein is BOS complex subunit ncln (ncln).